Reading from the N-terminus, the 126-residue chain is Large ribosomal subunit protein bL12 (126 aa).

The protein belongs to the bacterial ribosomal protein bL12 family. As to quaternary structure, homodimer. Part of the ribosomal stalk of the 50S ribosomal subunit. Forms a multimeric L10(L12)X complex, where L10 forms an elongated spine to which 2 to 4 L12 dimers bind in a sequential fashion. Binds GTP-bound translation factors.

Its function is as follows. Forms part of the ribosomal stalk which helps the ribosome interact with GTP-bound translation factors. Is thus essential for accurate translation. The chain is Large ribosomal subunit protein bL12 from Citrifermentans bemidjiense (strain ATCC BAA-1014 / DSM 16622 / JCM 12645 / Bem) (Geobacter bemidjiensis).